Here is a 205-residue protein sequence, read N- to C-terminus: Small ribosomal subunit protein uS4 (205 aa).

The S4 RNA-binding domain occupies 94–157 (SRLDAVVYRA…RNLALVLEAL (64 aa)).

This sequence belongs to the universal ribosomal protein uS4 family. As to quaternary structure, part of the 30S ribosomal subunit. Contacts protein S5. The interaction surface between S4 and S5 is involved in control of translational fidelity.

One of the primary rRNA binding proteins, it binds directly to 16S rRNA where it nucleates assembly of the body of the 30S subunit. In terms of biological role, with S5 and S12 plays an important role in translational accuracy. In Hyphomonas neptunium (strain ATCC 15444), this protein is Small ribosomal subunit protein uS4.